The following is a 193-amino-acid chain: Large ribosomal subunit protein uL11 (193 aa).

This sequence belongs to the universal ribosomal protein uL11 family. As to quaternary structure, part of the ribosomal stalk of the 50S ribosomal subunit. Interacts with L10 and the large rRNA to form the base of the stalk. L10 forms an elongated spine to which L12 dimers bind in a sequential fashion forming a multimeric L10(L12)X complex. Post-translationally, one or more lysine residues are methylated.

In terms of biological role, forms part of the ribosomal stalk which helps the ribosome interact with GTP-bound translation factors. The protein is Large ribosomal subunit protein uL11 of Mycoplasmopsis synoviae (strain 53) (Mycoplasma synoviae).